We begin with the raw amino-acid sequence, 627 residues long: 1-deoxy-D-xylulose-5-phosphate synthase (627 aa).

Residues H72 and 113–115 each bind thiamine diphosphate; that span reads GHS. D144 serves as a coordination point for Mg(2+). Thiamine diphosphate is bound by residues 145 to 146, N173, Y283, and E366; that span reads GA. N173 lines the Mg(2+) pocket.

It belongs to the transketolase family. DXPS subfamily. As to quaternary structure, homodimer. It depends on Mg(2+) as a cofactor. Thiamine diphosphate serves as cofactor.

It catalyses the reaction D-glyceraldehyde 3-phosphate + pyruvate + H(+) = 1-deoxy-D-xylulose 5-phosphate + CO2. The protein operates within metabolic intermediate biosynthesis; 1-deoxy-D-xylulose 5-phosphate biosynthesis; 1-deoxy-D-xylulose 5-phosphate from D-glyceraldehyde 3-phosphate and pyruvate: step 1/1. Functionally, catalyzes the acyloin condensation reaction between C atoms 2 and 3 of pyruvate and glyceraldehyde 3-phosphate to yield 1-deoxy-D-xylulose-5-phosphate (DXP). The polypeptide is 1-deoxy-D-xylulose-5-phosphate synthase (Macrococcus caseolyticus (strain JCSC5402) (Macrococcoides caseolyticum)).